The following is a 496-amino-acid chain: Cyclin-dependent kinase 16 (496 aa).

A disordered region spans residues 1-95; the sequence is MDRMKKIKRQ…SATSSDEVQS (95 aa). Ser-12 bears the Phosphoserine; by BRSK2 mark. 7 positions are modified to phosphoserine: Ser-36, Ser-42, Ser-64, Ser-65, Ser-78, Ser-82, and Ser-89. The span at 69–78 shows a compositional bias: basic and acidic residues; that stretch reads IVHEDMKMGS. The segment covering 83 to 93 has biased composition (polar residues); sequence DQASATSSDEV. Ser-95 carries the post-translational modification Phosphoserine; by CDK5. Ser-110, Ser-119, Ser-138, Ser-146, Ser-153, and Ser-155 each carry phosphoserine. Residues 165–446 form the Protein kinase domain; the sequence is YIKLDKLGEG…AEDARKHPFF (282 aa). Residues 171 to 179 and Lys-194 contribute to the ATP site; that span reads LGEGTYATV. The residue at position 175 (Thr-175) is a Phosphothreonine. The Proton acceptor role is filled by Asp-286. Thr-380 carries the phosphothreonine modification. Phosphoserine occurs at positions 391, 478, and 480.

This sequence belongs to the protein kinase superfamily. CMGC Ser/Thr protein kinase family. CDC2/CDKX subfamily. Found in a complex containing CABLES1, CDK17 and TDRD7. Interacts with BRSK2. Identified in a complex with NSF, syntaxin-1, synaptotagmin, SYN1, SYP and CDK5R1. Interacts with YWHAH, YWHAQ and YWHAZ. Interacts with CCNY; this interaction increases the CDK16 kinase activity. Interacts with CCNYL1; this interaction mutually increases the stability of CDK16 and CCNYL1 and increases the kinase activity of CDK16. Interacts with NSF. Post-translationally, phosphorylation of CDK16 is essential for the binding of CCNY, but also essential for the regulation of CDK16 kinase activity. Phosphorylation of CDK16 is essential for the binding of CCNYl1, but also essential for the regulation of CDK16 kinase activity. Ser-146 and Ser-153 are the critical sites for the binding of CCNYL1 and for modulating CDK16 kinase activity. Phosphorylation at Ser-153 inhibits kinase activity. Highly expressed in testis and brain, and detected at lower levels in heart, skeletal muscle, adipose tissue, lung, spleen and pancreas (at protein level). Ubiquitous with highest levels in testis and brain, with longer form predominant in all tissues except the testis.

Its subcellular location is the cytoplasm. It is found in the cytoplasmic vesicle. It localises to the secretory vesicle. The protein localises to the cell membrane. The protein resides in the synapse. Its subcellular location is the synaptosome. It catalyses the reaction L-seryl-[protein] + ATP = O-phospho-L-seryl-[protein] + ADP + H(+). It carries out the reaction L-threonyl-[protein] + ATP = O-phospho-L-threonyl-[protein] + ADP + H(+). Its function is as follows. Protein kinase that plays a role in vesicle-mediated transport processes and exocytosis. Can phosphorylate CCNY at 'Ser-336' (in vitro). Plays a role in the regulation of insulin secretion in response to changes in blood glucose levels. Regulates GH1 release by brain neurons. Phosphorylates NSF, and thereby regulates NSF oligomerization. Required for normal spermatogenesis. Regulates neuron differentiation and dendrite development. This is Cyclin-dependent kinase 16 (Cdk16) from Mus musculus (Mouse).